Consider the following 543-residue polypeptide: uncharacterized protein (543 aa).

The TRAM domain maps to 1-59; it reads MLKKNDIVEVEIVDLTHEGAGVAKVDGLVFFVENALPSEKILMRVLKVNKKIGFGKVEK. S-adenosyl-L-methionine-binding residues include Gln-283, Tyr-312, Glu-333, and Asp-381. Cys-408 serves as the catalytic Nucleophile.

It belongs to the class I-like SAM-binding methyltransferase superfamily. RNA M5U methyltransferase family.

This is an uncharacterized protein from Streptococcus pneumoniae (strain ATCC BAA-255 / R6).